Consider the following 32-residue polypeptide: Cytochrome b6-f complex subunit 7 (32 aa).

The helical transmembrane segment at A9–L27 threads the bilayer.

The protein belongs to the PetM family. As to quaternary structure, the 4 large subunits of the cytochrome b6-f complex are cytochrome b6, subunit IV (17 kDa polypeptide, PetD), cytochrome f and the Rieske protein, while the 4 small subunits are PetG, PetL, PetM and PetN. The complex functions as a dimer.

It localises to the cellular thylakoid membrane. In terms of biological role, component of the cytochrome b6-f complex, which mediates electron transfer between photosystem II (PSII) and photosystem I (PSI), cyclic electron flow around PSI, and state transitions. This Synechococcus sp. (strain RCC307) protein is Cytochrome b6-f complex subunit 7.